The chain runs to 116 residues: Large ribosomal subunit protein bL20 (116 aa).

It belongs to the bacterial ribosomal protein bL20 family.

Its function is as follows. Binds directly to 23S ribosomal RNA and is necessary for the in vitro assembly process of the 50S ribosomal subunit. It is not involved in the protein synthesizing functions of that subunit. The polypeptide is Large ribosomal subunit protein bL20 (Mycoplasmopsis agalactiae (strain NCTC 10123 / CIP 59.7 / PG2) (Mycoplasma agalactiae)).